The sequence spans 162 residues: Cyclic pyranopterin monophosphate synthase (162 aa).

Substrate contacts are provided by residues 75–77 and 115–116; these read MCH and ME. Residue Asp-130 is part of the active site.

It belongs to the MoaC family. As to quaternary structure, homohexamer; trimer of dimers.

It catalyses the reaction (8S)-3',8-cyclo-7,8-dihydroguanosine 5'-triphosphate = cyclic pyranopterin phosphate + diphosphate. Its pathway is cofactor biosynthesis; molybdopterin biosynthesis. Catalyzes the conversion of (8S)-3',8-cyclo-7,8-dihydroguanosine 5'-triphosphate to cyclic pyranopterin monophosphate (cPMP). This chain is Cyclic pyranopterin monophosphate synthase, found in Geobacillus thermodenitrificans (strain NG80-2).